The chain runs to 278 residues: ATP synthase subunit a (278 aa).

Transmembrane regions (helical) follow at residues 43-63 (TWHIDSLFFSVGLGVLFLWIF), 104-124 (IAPLALTIFVWVFMMNFMDMI), 148-168 (DVNITFSLAIGVFLLIIFYSI), 191-211 (IPVNLLLETVTLIAKPISLAL), 222-242 (LIFILIALMYGTNLLLSTLGV), and 249-269 (LIFHILVITLQAFIFMMLTIV).

It belongs to the ATPase A chain family. In terms of assembly, F-type ATPases have 2 components, CF(1) - the catalytic core - and CF(0) - the membrane proton channel. CF(1) has five subunits: alpha(3), beta(3), gamma(1), delta(1), epsilon(1). CF(0) has three main subunits: a(1), b(2) and c(9-12). The alpha and beta chains form an alternating ring which encloses part of the gamma chain. CF(1) is attached to CF(0) by a central stalk formed by the gamma and epsilon chains, while a peripheral stalk is formed by the delta and b chains.

It localises to the cell inner membrane. Its function is as follows. Key component of the proton channel; it plays a direct role in the translocation of protons across the membrane. This chain is ATP synthase subunit a, found in Shewanella baltica (strain OS185).